A 156-amino-acid chain; its full sequence is Small ribosomal subunit protein bS16 (156 aa).

Positions 85–120 are enriched in basic and acidic residues; sequence GESGAEGTLKSKSEKEAFVAPERDSVILPEEPKQEE. Positions 85–156 are disordered; that stretch reads GESGAEGTLK…APAEDAEKSE (72 aa). Over residues 132–150 the composition is skewed to acidic residues; sequence PAEEAAEAPAEEAAEAPAE.

It belongs to the bacterial ribosomal protein bS16 family.

The sequence is that of Small ribosomal subunit protein bS16 from Micrococcus luteus (strain ATCC 4698 / DSM 20030 / JCM 1464 / CCM 169 / CCUG 5858 / IAM 1056 / NBRC 3333 / NCIMB 9278 / NCTC 2665 / VKM Ac-2230) (Micrococcus lysodeikticus).